Consider the following 396-residue polypeptide: Probable sugar efflux transporter (396 aa).

12 helical membrane-spanning segments follow: residues 15–35 (VVTLAVAAFIFNTTEFVPVGL), 50–70 (VGIMLTIYAWVVALMSLPFML), 81–101 (LICLFVVFIASHVLSFLSWSF), 103–123 (VLVISRIGVAFAHAIFWSITA), 136–156 (AQALSLIATGTALAMVLGLPL), 170–190 (FFAIGIGALITLLCLIKLLPL), 209–229 (PALMSIYLLTVVVVTAHYTAY), 246–266 (FATALLLLLGGAGIIGSVIFG), 275–295 (ALVSTAIALLLVCLALLLPAA), 299–319 (IHLGVLSIFWGIAMMIIGLGM), 333–353 (VAMALFSGIFNIGIGAGALVG), and 364–384 (MIGYVGAVPAFAALIWSIIIF).

This sequence belongs to the major facilitator superfamily. SotB (TC 2.A.1.2) family.

It is found in the cell inner membrane. In terms of biological role, involved in the efflux of sugars. The physiological role may be the reduction of the intracellular concentration of toxic sugars or sugar metabolites. The sequence is that of Probable sugar efflux transporter from Escherichia coli O127:H6 (strain E2348/69 / EPEC).